A 403-amino-acid polypeptide reads, in one-letter code: MSVAEQMAIIKRGATEILLEKELEEKIEKSLSTGVPLRIKAGFDPTAPDLHLGHTVLLHKMRQFQQLGHEVCFLIGDFTGMIGDPTGKSETRKALTREDVLKNAETYKEQVFKILDPKKTRVVFNSEWLGKMTASDMIGLAAQSTVARMLERDDFGKRFANQLPISIHEFLYPLIQGYDSVALKADVELGGTDQKFNLLVGRELQRVWKQSPQSVITMPLLEGLDGVNKMSKSLGNYIGINEPADEIFGKIMSISDELMLRYYELLSDLTLAEIEKLKAAMRDGDVHPMAAKKQLAREIVARYHGAVAADNAEESFVRRFRDNQTPEEMPECILSAEEGKVLLGRLLAEAGLVKSNSEGRRAINQGGVKVNGEKVTNDMLELPGVGEYVLQFGKRRFARIVFK.

The 'HIGH' region motif lies at 45–54 (PTAPDLHLGH). Positions 229-233 (KMSKS) match the 'KMSKS' region motif. Lys-232 is an ATP binding site. One can recognise an S4 RNA-binding domain in the interval 341–402 (VLLGRLLAEA…GKRRFARIVF (62 aa)).

Belongs to the class-I aminoacyl-tRNA synthetase family. TyrS type 2 subfamily. As to quaternary structure, homodimer.

It is found in the cytoplasm. The enzyme catalyses tRNA(Tyr) + L-tyrosine + ATP = L-tyrosyl-tRNA(Tyr) + AMP + diphosphate + H(+). Catalyzes the attachment of tyrosine to tRNA(Tyr) in a two-step reaction: tyrosine is first activated by ATP to form Tyr-AMP and then transferred to the acceptor end of tRNA(Tyr). The protein is Tyrosine--tRNA ligase of Geobacter metallireducens (strain ATCC 53774 / DSM 7210 / GS-15).